Consider the following 499-residue polypeptide: Ribose import ATP-binding protein RbsA (499 aa).

ABC transporter domains lie at 3-240 (VEMS…VGRE) and 250-494 (LEPG…TGGD). ATP is bound at residue 35–42 (GENGAGKS).

Belongs to the ABC transporter superfamily. Ribose importer (TC 3.A.1.2.1) family. The complex is composed of an ATP-binding protein (RbsA), two transmembrane proteins (RbsC) and a solute-binding protein (RbsB).

It localises to the cell membrane. It carries out the reaction D-ribose(out) + ATP + H2O = D-ribose(in) + ADP + phosphate + H(+). In terms of biological role, part of the ABC transporter complex RbsABC involved in ribose import. Responsible for energy coupling to the transport system. The chain is Ribose import ATP-binding protein RbsA from Shouchella clausii (strain KSM-K16) (Alkalihalobacillus clausii).